The following is a 70-amino-acid chain: Large ribosomal subunit protein eL24 (70 aa).

Positions 7, 10, 33, and 37 each coordinate Zn(2+). A C4-type zinc finger spans residues 7 to 37 (CSFCGYEIEPGKGKMVVEKDGTVLYFCSSKC).

Belongs to the eukaryotic ribosomal protein eL24 family. Part of the 50S ribosomal subunit. Forms a cluster with proteins L3 and L14. It depends on Zn(2+) as a cofactor.

In terms of biological role, binds to the 23S rRNA. The protein is Large ribosomal subunit protein eL24 of Methanocaldococcus jannaschii (strain ATCC 43067 / DSM 2661 / JAL-1 / JCM 10045 / NBRC 100440) (Methanococcus jannaschii).